The sequence spans 1010 residues: Sodium/potassium-transporting ATPase subunit alpha-3 (1010 aa).

The segment at 1 to 21 (MGDKGEKESPKKGKGKRDLDD) is disordered. The Cytoplasmic segment spans residues 1-74 (MGDKGEKESP…NALTPPPTTP (74 aa)). Residues 69-71 (PPP) form an interaction with phosphoinositide-3 kinase region. A helical transmembrane segment spans residues 75–95 (EWVKFCRQLFGGFSILLWIGA). The Extracellular portion of the chain corresponds to 96–118 (ILCFLAYGIQAGTEDEPSNDNLY). Residues 119-139 (LGIVLAAVVIITGCFSYYQEA) traverse the membrane as a helical segment. Residues 140–275 (KSSKIMESFK…VGKTPIAVEI (136 aa)) lie on the Cytoplasmic side of the membrane. The helical transmembrane segment at 276 to 295 (EHFIQLITGVAVFLGISFFV) threads the bilayer. Residues 296–307 (LSLILGYTWLEA) lie on the Extracellular side of the membrane. The chain crosses the membrane as a helical span at residues 308–325 (VIFLIGIIVANVPEGLLA). Over 326–759 (TVTVCLTLTA…EEGRLIFDNL (434 aa)) the chain is Cytoplasmic. The active-site 4-aspartylphosphate intermediate is the aspartate 363. Residues aspartate 704 and aspartate 708 each coordinate Mg(2+). The helical transmembrane segment at 760-779 (KKSIAYTLTSNIPEITPFLL) threads the bilayer. Topologically, residues 780–789 (FIMANIPLPL) are extracellular. The helical transmembrane segment at 790–810 (GTITILCIDLGTDMVPAISLA) threads the bilayer. The Cytoplasmic portion of the chain corresponds to 811–830 (YEAAESDIMKRQPRNPRSDK). A helical transmembrane segment spans residues 831 to 853 (LVNERLISMAYGQIGMIQALGGF). Residues 854–905 (FSYFVILAENGFLPSCLVGIRLSWDDRTINDLEDSYGQQWTYEQRKVVEFTC) are Extracellular-facing. Residues 906–925 (HTAFFVSIVVVQWADLIICK) traverse the membrane as a helical segment. Over 926 to 938 (TRRNSVFQQGMKN) the chain is Cytoplasmic. A Phosphoserine; by PKA modification is found at serine 930. The helical transmembrane segment at 939-957 (KILIFGLFEETALAAFLSY) threads the bilayer. Residues 958–972 (CPGMDVALRMYPLKP) lie on the Extracellular side of the membrane. The chain crosses the membrane as a helical span at residues 973–993 (SWWFCAFPYSFLIFVYDEIRK). Topologically, residues 994–1010 (LILRRNPGGWVEKETYY) are cytoplasmic.

It belongs to the cation transport ATPase (P-type) (TC 3.A.3) family. Type IIC subfamily. In terms of assembly, the sodium/potassium-transporting ATPase is composed of a catalytic alpha subunit, an auxiliary non-catalytic beta subunit and an additional regulatory subunit.

Its subcellular location is the cell membrane. The enzyme catalyses K(+)(out) + Na(+)(in) + ATP + H2O = K(+)(in) + Na(+)(out) + ADP + phosphate + H(+). Its function is as follows. This is the catalytic component of the active enzyme, which catalyzes the hydrolysis of ATP coupled with the exchange of sodium and potassium ions across the plasma membrane. This action creates the electrochemical gradient of sodium and potassium ions, providing the energy for active transport of various nutrients. This is Sodium/potassium-transporting ATPase subunit alpha-3 (ATP1A3) from Gallus gallus (Chicken).